The following is an 82-amino-acid chain: Cytochrome b559 subunit alpha (82 aa).

Residues 22–36 (IIHAVTLPAIFIAGF) form a helical membrane-spanning segment. His24 lines the heme pocket.

It belongs to the PsbE/PsbF family. As to quaternary structure, heterodimer of an alpha subunit and a beta subunit. PSII is composed of 1 copy each of membrane proteins PsbA, PsbB, PsbC, PsbD, PsbE, PsbF, PsbH, PsbI, PsbJ, PsbK, PsbL, PsbM, PsbT, PsbX, PsbY, Psb30/Ycf12, peripheral proteins PsbO, CyanoQ (PsbQ), PsbU, PsbV and a large number of cofactors. It forms dimeric complexes. Heme b serves as cofactor.

It is found in the cellular thylakoid membrane. In terms of biological role, this b-type cytochrome is tightly associated with the reaction center of photosystem II (PSII). PSII is a light-driven water:plastoquinone oxidoreductase that uses light energy to abstract electrons from H(2)O, generating O(2) and a proton gradient subsequently used for ATP formation. It consists of a core antenna complex that captures photons, and an electron transfer chain that converts photonic excitation into a charge separation. The chain is Cytochrome b559 subunit alpha from Prochlorococcus marinus (strain MIT 9515).